Here is a 250-residue protein sequence, read N- to C-terminus: Probable dihydroorotate dehydrogenase B (NAD(+)), electron transfer subunit (250 aa).

Positions 1–89 constitute an FAD-binding FR-type domain; the sequence is MNRITVDQVR…RGPYGNGFQI (89 aa). The [2Fe-2S] cluster site is built by cysteine 200, cysteine 205, cysteine 208, and cysteine 216.

This sequence belongs to the PyrK family. Heterotetramer of 2 PyrK and 2 PyrD type B subunits. It depends on [2Fe-2S] cluster as a cofactor. FAD is required as a cofactor.

It functions in the pathway pyrimidine metabolism; UMP biosynthesis via de novo pathway; orotate from (S)-dihydroorotate (NAD(+) route): step 1/1. In terms of biological role, responsible for channeling the electrons from the oxidation of dihydroorotate from the FMN redox center in the PyrD type B subunit to the ultimate electron acceptor NAD(+). The chain is Probable dihydroorotate dehydrogenase B (NAD(+)), electron transfer subunit from Thermoplasma acidophilum (strain ATCC 25905 / DSM 1728 / JCM 9062 / NBRC 15155 / AMRC-C165).